The sequence spans 234 residues: Demethylmenaquinone methyltransferase (234 aa).

Residues Thr-58, Asp-79, and Asn-106–Ala-107 each bind S-adenosyl-L-methionine.

It belongs to the class I-like SAM-binding methyltransferase superfamily. MenG/UbiE family.

It catalyses the reaction a 2-demethylmenaquinol + S-adenosyl-L-methionine = a menaquinol + S-adenosyl-L-homocysteine + H(+). It participates in quinol/quinone metabolism; menaquinone biosynthesis; menaquinol from 1,4-dihydroxy-2-naphthoate: step 2/2. Methyltransferase required for the conversion of demethylmenaquinol (DMKH2) to menaquinol (MKH2). The protein is Demethylmenaquinone methyltransferase of Bacillus pumilus (strain SAFR-032).